Here is a 367-residue protein sequence, read N- to C-terminus: Leucine-rich repeat-containing protein 28 (367 aa).

LRR repeat units follow at residues 16 to 36 (KHKN…ELLK), 42 to 63 (HLER…LAQK), 66 to 87 (NLVE…IGSL), 89 to 111 (KLQC…GGLR), 112 to 133 (ALRH…VGDL), 135 to 156 (ELQT…LHLC), 158 to 180 (SLQY…CQLP), 181 to 202 (SLNE…LGRS), and 204 to 226 (ELQY…LYNK).

The protein is Leucine-rich repeat-containing protein 28 (Lrrc28) of Mus musculus (Mouse).